The chain runs to 138 residues: Small ribosomal subunit protein uS12 (138 aa).

Positions 33–55 (KEHTNVSSPQKRGVCTRVGTMTP) are disordered. A 3-methylthioaspartic acid modification is found at Asp-102.

Belongs to the universal ribosomal protein uS12 family. In terms of assembly, part of the 30S ribosomal subunit. Contacts proteins S8 and S17. May interact with IF1 in the 30S initiation complex.

Its function is as follows. With S4 and S5 plays an important role in translational accuracy. Functionally, interacts with and stabilizes bases of the 16S rRNA that are involved in tRNA selection in the A site and with the mRNA backbone. Located at the interface of the 30S and 50S subunits, it traverses the body of the 30S subunit contacting proteins on the other side and probably holding the rRNA structure together. The combined cluster of proteins S8, S12 and S17 appears to hold together the shoulder and platform of the 30S subunit. This chain is Small ribosomal subunit protein uS12, found in Bacillus licheniformis (strain ATCC 14580 / DSM 13 / JCM 2505 / CCUG 7422 / NBRC 12200 / NCIMB 9375 / NCTC 10341 / NRRL NRS-1264 / Gibson 46).